The chain runs to 561 residues: MCLSFLFLVSLATCVVYGNPSSPPVVDTTKGKVLGKYVSLEGVTQSVAVFLGVPFAKPPLGSLRFAPPQPAEPWSFVKNTTTYPPMCSQDAAKGQRMNDLLTNRKEKIHLEFSEDCLYLNIYTPADFTKNSRLPVMVWIHGGGMTLGGASTYDGRVLSAYENVVVVAIQYRLGIWGFFSTGDEHSRGNWGHLDQVAALHWVQDNIANFGGDPGSVTIFGESAGGFSVSVLVLSPLTKNLFHRAISESGVVFLPGLLTKDVRPAAKQIADMAGCETTTSAIIVHCLRQKTEEELLEIMKKMNLIKLSSQRDNKESYHFLSTVVDNVVLPKDPKEILAEKNFNTVPYIVGINKQECGWLLPTMMGFVPADVELDKKMAITLLEKFASLYGIPEDIIPVAIEKYRKGSDDSIKIRDGILAFIGDVSFSIPSVMVSRDHRDAGAPTYMYEYQYYPSFSSPQRPKHVVGDHADDLYSVFGAPILRDGASEEEIKLSKMVMKFWANFARNGNPNGRGLPHWPQYDQKEEYLQIGATTQQSQRLKAEEVAFWTQLLAKRQPQPHHNEL.

Residues Met1–Gly18 form the signal peptide. A glycan (N-linked (GlcNAc...) asparagine) is linked at Asn79. The cysteines at positions 87 and 116 are disulfide-linked. Ser221 (acyl-ester intermediate) is an active-site residue. Cys273 and Cys284 are joined by a disulfide. Active-site charge relay system residues include Glu353 and His466. Positions His558–Leu561 match the Prevents secretion from ER motif.

It belongs to the type-B carboxylesterase/lipase family. As to expression, expressed in liver and kidney.

Its subcellular location is the lipid droplet. It localises to the cytoplasm. It is found in the cytosol. The protein resides in the endoplasmic reticulum. The protein localises to the microsome. The enzyme catalyses a carboxylic ester + H2O = an alcohol + a carboxylate + H(+). It carries out the reaction all-trans-retinyl hexadecanoate + H2O = all-trans-retinol + hexadecanoate + H(+). In terms of biological role, involved in the detoxification of xenobiotics and in the activation of ester and amide prodrugs. Hydrolyzes retinyl esters. Hydrolyzes p-nitrophenyl butyrate (PNPB), triacylglycerol and monoacylglycerol. Shows higher activity against PNPB, a short-chain fatty acid ester, than against triolein, a long-chain fatty acid ester. Shows no detectable activity against diacylglycerol, cholesterol ester or phospholipids. May play a role in adipocyte lipolysis. The protein is Liver carboxylesterase 1F of Rattus norvegicus (Rat).